The following is a 64-amino-acid chain: Large ribosomal subunit protein bL35 (64 aa).

This sequence belongs to the bacterial ribosomal protein bL35 family.

The protein is Large ribosomal subunit protein bL35 of Pseudomonas entomophila (strain L48).